A 1646-amino-acid chain; its full sequence is Monensin-resistant homolog 2 (1646 aa).

It belongs to the MON2 family.

The protein localises to the golgi apparatus. May be required for traffic between late Golgi and early endosomes. The polypeptide is Monensin-resistant homolog 2 (mon-2) (Caenorhabditis elegans).